The following is a 431-amino-acid chain: Serine hydroxymethyltransferase 2 (431 aa).

(6S)-5,6,7,8-tetrahydrofolate contacts are provided by residues leucine 131 and 135-137 (GHL). Lysine 240 carries the N6-(pyridoxal phosphate)lysine modification. (6S)-5,6,7,8-tetrahydrofolate is bound at residue glutamate 256.

Belongs to the SHMT family. In terms of assembly, homodimer. Pyridoxal 5'-phosphate is required as a cofactor.

The protein resides in the cytoplasm. It catalyses the reaction (6R)-5,10-methylene-5,6,7,8-tetrahydrofolate + glycine + H2O = (6S)-5,6,7,8-tetrahydrofolate + L-serine. Its pathway is one-carbon metabolism; tetrahydrofolate interconversion. It functions in the pathway amino-acid biosynthesis; glycine biosynthesis; glycine from L-serine: step 1/1. Its function is as follows. Catalyzes the reversible interconversion of serine and glycine with tetrahydrofolate (THF) serving as the one-carbon carrier. This reaction serves as the major source of one-carbon groups required for the biosynthesis of purines, thymidylate, methionine, and other important biomolecules. Also exhibits THF-independent aldolase activity toward beta-hydroxyamino acids, producing glycine and aldehydes, via a retro-aldol mechanism. The polypeptide is Serine hydroxymethyltransferase 2 (Vibrio vulnificus (strain YJ016)).